A 349-amino-acid polypeptide reads, in one-letter code: Phenylalanine--tRNA ligase alpha subunit (349 aa).

Glu-258 contributes to the Mg(2+) binding site.

Belongs to the class-II aminoacyl-tRNA synthetase family. Phe-tRNA synthetase alpha subunit type 1 subfamily. In terms of assembly, tetramer of two alpha and two beta subunits. Mg(2+) serves as cofactor.

It localises to the cytoplasm. The catalysed reaction is tRNA(Phe) + L-phenylalanine + ATP = L-phenylalanyl-tRNA(Phe) + AMP + diphosphate + H(+). This chain is Phenylalanine--tRNA ligase alpha subunit, found in Rickettsia felis (strain ATCC VR-1525 / URRWXCal2) (Rickettsia azadi).